The sequence spans 311 residues: MSQRDTLVHLFAGGCGGTVGAILTCPLEVVKTRLQSSSVTFYISEVQLSTVNGASVARMAPPGPLHCLKLILEKEGPRSLFRGLGPNLVGVAPSRAIYFAAYSTSKEKLNNVFDPDSTQVHMLSAGLAGFTAITATNPIWLIKTRLQLDARNRGERRMSAFECVRRVYQSDGLRGFYRGMSASYAGISETVIHFVIYESIKRKLIEHKANSNMDDEDESVKDASDFVGMMLAAATSKTCATSIAYPHEVIRTRLREEGSKYRSFFQTLNMVFREEGYRALYRGLTTHLVRQIPNTAIMMCTYELVVYLLNG.

Solcar repeat units follow at residues 4 to 108, 116 to 203, and 224 to 308; these read RDTL…SKEK, DSTQ…IKRK, and SDFV…VVYL. Helical transmembrane passes span 7–27, 41–57, 111–131, 180–200, 226–246, and 291–311; these read LVHL…TCPL, FYIS…ASVA, NVFD…AGFT, MSAS…YESI, FVGM…IAYP, and QIPN…LLNG.

Belongs to the mitochondrial carrier (TC 2.A.29) family.

Its subcellular location is the mitochondrion inner membrane. The chain is Solute carrier family 25 member 36-A (slc25a36a) from Danio rerio (Zebrafish).